The chain runs to 237 residues: MQKLAELYRGKAKTVYTTENPDLLVLEFRNDTSALDGQRIEQFDRKGMVNNKFNHFIMTKLEEAGIPTQMERLLSDTEVLVKKLEMIPVECVIRNRAAGSLVKRLGIEEGLSLNPPLFDLFLKNDAMHDPMVNESYCKTFGWATEAQLARMKELSYLANDVLSKLFDDAGLILVDFKLEFGLFNGEVVLGDEFSPDGSRLWDKKTLNKMDKDRYRQSLGGLIEAYEEVAHRIGVKLD.

Belongs to the SAICAR synthetase family.

It catalyses the reaction 5-amino-1-(5-phospho-D-ribosyl)imidazole-4-carboxylate + L-aspartate + ATP = (2S)-2-[5-amino-1-(5-phospho-beta-D-ribosyl)imidazole-4-carboxamido]succinate + ADP + phosphate + 2 H(+). The protein operates within purine metabolism; IMP biosynthesis via de novo pathway; 5-amino-1-(5-phospho-D-ribosyl)imidazole-4-carboxamide from 5-amino-1-(5-phospho-D-ribosyl)imidazole-4-carboxylate: step 1/2. In Yersinia pseudotuberculosis serotype O:1b (strain IP 31758), this protein is Phosphoribosylaminoimidazole-succinocarboxamide synthase.